The primary structure comprises 206 residues: N-(5'-phosphoribosyl)anthranilate isomerase (206 aa).

Belongs to the TrpF family.

It carries out the reaction N-(5-phospho-beta-D-ribosyl)anthranilate = 1-(2-carboxyphenylamino)-1-deoxy-D-ribulose 5-phosphate. It functions in the pathway amino-acid biosynthesis; L-tryptophan biosynthesis; L-tryptophan from chorismate: step 3/5. In Pseudomonas savastanoi pv. phaseolicola (strain 1448A / Race 6) (Pseudomonas syringae pv. phaseolicola (strain 1448A / Race 6)), this protein is N-(5'-phosphoribosyl)anthranilate isomerase.